The chain runs to 172 residues: Ribosome maturation factor RimM (172 aa).

Residues 93-167 (DEHEFYYHEI…RVVITPIPGM (75 aa)) enclose the PRC barrel domain.

It belongs to the RimM family. In terms of assembly, binds ribosomal protein uS19.

It localises to the cytoplasm. Functionally, an accessory protein needed during the final step in the assembly of 30S ribosomal subunit, possibly for assembly of the head region. Essential for efficient processing of 16S rRNA. May be needed both before and after RbfA during the maturation of 16S rRNA. It has affinity for free ribosomal 30S subunits but not for 70S ribosomes. This is Ribosome maturation factor RimM from Exiguobacterium sp. (strain ATCC BAA-1283 / AT1b).